The following is a 760-amino-acid chain: Golgin subfamily A member 5 (760 aa).

Over 1-727 (MSWFVDLAGK…IFLRRYPMAR (727 aa)) the chain is Cytoplasmic. Polar residues predominate over residues 95 to 111 (VSSTTPLGSSSKASSNF). Disordered stretches follow at residues 95–114 (VSSTTPLGSSSKASSNFVRP), 126–216 (DFLN…SQAD), and 432–456 (TEEKQRAEDLQQQAKSSRSAAEYTK). The segment covering 135 to 146 (QSEKKEVRRETV) has biased composition (basic and acidic residues). Residues 148 to 166 (KAFSPTGVSAQSQMPTVSL) show a composition bias toward polar residues. Low complexity predominate over residues 174-201 (PSVTPTPSSTQGLSRNSSLGSLSSSSHS). Positions 249–668 (QGQEHVISNL…LQGGQNSASH (420 aa)) form a coiled coil. Over residues 441 to 450 (LQQQAKSSRS) the composition is skewed to polar residues. Residues 728–748 (VFVIIYMALLHLWVMIVLLTY) traverse the membrane as a helical; Anchor for type IV membrane protein segment. At 749 to 760 (TPEMHHSHPDGR) the chain is on the extracellular side.

The protein localises to the golgi apparatus membrane. Involved in maintaining Golgi structure. Stimulates the formation of Golgi stacks and ribbons. Involved in intra-Golgi retrograde transport. The protein is Golgin subfamily A member 5 (golga5) of Danio rerio (Zebrafish).